Reading from the N-terminus, the 256-residue chain is 3-hydroxy-5-phosphonooxypentane-2,4-dione thiolase (256 aa).

Catalysis depends on K168, which acts as the Schiff-base intermediate with substrate.

It belongs to the DeoC/FbaB aldolase family. In terms of assembly, homodecamer.

The protein resides in the cytoplasm. The catalysed reaction is dihydroxyacetone phosphate + acetyl-CoA = 3-hydroxy-2,4-dioxopentyl phosphate + CoA. In terms of biological role, involved in the degradation of phospho-AI-2, thereby terminating induction of the lsr operon and closing the AI-2 signaling cycle. Catalyzes the transfer of an acetyl moiety from 3-hydroxy-5-phosphonooxypentane-2,4-dione to CoA to form glycerone phosphate and acetyl-CoA. In Shigella flexneri serotype 5b (strain 8401), this protein is 3-hydroxy-5-phosphonooxypentane-2,4-dione thiolase (lsrF).